The primary structure comprises 92 residues: Small ribosomal subunit protein uS19 (92 aa).

This sequence belongs to the universal ribosomal protein uS19 family.

Protein S19 forms a complex with S13 that binds strongly to the 16S ribosomal RNA. The polypeptide is Small ribosomal subunit protein uS19 (Lachnoclostridium phytofermentans (strain ATCC 700394 / DSM 18823 / ISDg) (Clostridium phytofermentans)).